The chain runs to 377 residues: MSVKELKERHMAATQTVNDLREKLKQKRLQLLDTDVSGYARSQGKTPVIFGPTDLVCCRILQGHTGKVYSLDWTPEKNRIVSASQDGRLIVWNALTSQKTHAIKLPCAWVMTCAFSPSGQSVACGGLDSVCSIFNLNSPIDKDGNHPVSRMLSGHKGYVSSCQYVPDEDTHVITSSGDQTCVLWDITTGLRTSVFGGEFQSGHTADVQSVSISSSNPRLFVSGSCDSTARLWDTRVASRAQRTFYGHEGDVNTVKFFPDGNRFGTGSDDGTCRLFDIRTGHQLQVYYQPHGDGDIPHVTSMAFSISGRLLFVGYSNGDCYVWDTLLAKVVLNLGAVQNSHEGRISCLGLSADGSALCTGSWDTNLKIWAFGGHRSVI.

7 WD repeats span residues Gly63–Asn93, Leu105–Asn135, Gly154–Asp185, Gly202–Asp233, Gly246–Asp276, Gly293–Asp323, and Ser339–Ala369.

This sequence belongs to the WD repeat G protein beta family. As to quaternary structure, g proteins are composed of 3 units, alpha, beta and gamma.

Guanine nucleotide-binding proteins (G proteins) are involved as a modulator or transducer in various transmembrane signaling systems. The beta and gamma chains are required for the GTPase activity, for replacement of GDP by GTP, and for G protein-effector interaction. This chain is Guanine nucleotide-binding protein subunit beta-2, found in Nicotiana tabacum (Common tobacco).